The chain runs to 95 residues: Sec-independent protein translocase protein TatA (95 aa).

A helical membrane pass occupies residues Met-1–Gly-21. The interval Gly-42–Val-95 is disordered.

The protein belongs to the TatA/E family. The Tat system comprises two distinct complexes: a TatABC complex, containing multiple copies of TatA, TatB and TatC subunits, and a separate TatA complex, containing only TatA subunits. Substrates initially bind to the TatABC complex, which probably triggers association of the separate TatA complex to form the active translocon.

It is found in the cell inner membrane. Functionally, part of the twin-arginine translocation (Tat) system that transports large folded proteins containing a characteristic twin-arginine motif in their signal peptide across membranes. TatA could form the protein-conducting channel of the Tat system. The protein is Sec-independent protein translocase protein TatA of Methylorubrum extorquens (strain PA1) (Methylobacterium extorquens).